The primary structure comprises 159 residues: Ribosomal RNA large subunit methyltransferase H (159 aa).

Residues Leu-76, Gly-108, and 127-132 each bind S-adenosyl-L-methionine; that span reads FGLLTL.

Belongs to the RNA methyltransferase RlmH family. As to quaternary structure, homodimer.

The protein localises to the cytoplasm. The catalysed reaction is pseudouridine(1915) in 23S rRNA + S-adenosyl-L-methionine = N(3)-methylpseudouridine(1915) in 23S rRNA + S-adenosyl-L-homocysteine + H(+). Its function is as follows. Specifically methylates the pseudouridine at position 1915 (m3Psi1915) in 23S rRNA. The sequence is that of Ribosomal RNA large subunit methyltransferase H from Streptococcus pyogenes serotype M5 (strain Manfredo).